The chain runs to 165 residues: Disulfide bond formation protein B (165 aa).

The Cytoplasmic segment spans residues 1-10 (MPAWLTNRTI). Residues 11 to 27 (YFLCFLAIAGLMGFAFY) traverse the membrane as a helical segment. Over 28–45 (LQYVKDLEPCPLCMAQRI) the chain is Periplasmic. Cys37 and Cys40 are oxidised to a cystine. A helical transmembrane segment spans residues 46–62 (AFVLAGLVFLAAALHNP). The Cytoplasmic segment spans residues 63–68 (KNTGTT). Residues 69 to 86 (VYAFLGWVTTLGGAALAT) form a helical membrane-spanning segment. Residues 87–143 (RQLWLQSLPADQVPACGPGLEYMLEAFPFSEVLTMMLTGTGECAEVQWTFLGLSIPG) are Periplasmic-facing. A disulfide bridge connects residues Cys102 and Cys129. Residues 144-162 (WTLVAFIGFTAVWAFAWVR) traverse the membrane as a helical segment. Residues 163 to 165 (RPR) lie on the Cytoplasmic side of the membrane.

The protein belongs to the DsbB family.

The protein localises to the cell inner membrane. Its function is as follows. Required for disulfide bond formation in some periplasmic proteins. Acts by oxidizing the DsbA protein. The chain is Disulfide bond formation protein B from Hahella chejuensis (strain KCTC 2396).